The primary structure comprises 516 residues: Protein indeterminate-domain 4, chloroplastic (516 aa).

Positions 1 to 26 (MSSSSYNTSVIPSSSSSAQPFFITSS) are enriched in low complexity. The interval 1-68 (MSSSSYNTSV…QPGNPNPDAE (68 aa)) is disordered. Residues 1 to 70 (MSSSSYNTSV…GNPNPDAEVV (70 aa)) constitute a chloroplast transit peptide. S73 is modified (phosphoserine). C2H2-type zinc fingers lie at residues 83–105 (FICD…RRGH) and 124–154 (YLCP…YRKH). The short motif at 146 to 153 (IKKHYYRK) is the Nuclear localization signal element. The C2H2-type 2; degenerate zinc-finger motif lies at 159-182 (WKCEKCSKRYAVQSDWKAHSKTCG). The Zn(2+) site is built by C161, C164, H177, C181, C188, C190, H203, and C207. Residues 186–209 (YRCDCGTIFSRRDSYITHRAFCDA) form a CCHC-type 2; atypical zinc finger. An SHR-binding region spans residues 196 to 208 (RRDSYITHRAFCD). The disordered stretch occupies residues 483–516 (NRGGGGGGRGSARGGVSLDGEAKFPEQNYPFGRG). Residues 484–495 (RGGGGGGRGSAR) are compositionally biased toward gly residues.

Binds to RGA and SCL3 competitively in the nucleus.

The protein resides in the plastid. The protein localises to the chloroplast. It is found in the nucleus. Its function is as follows. Transcription factor that may act a transcriptional activator of nuclear-encoded photosynthetic gene expression. Binds DNA via its zinc fingers. Recognizes and binds to SCL3 promoter sequence 5'-AGACAA-3' to promote its expression when in complex with RGA. In Arabidopsis thaliana (Mouse-ear cress), this protein is Protein indeterminate-domain 4, chloroplastic.